The chain runs to 215 residues: Large ribosomal subunit protein uL3 (215 aa).

A disordered region spans residues 134 to 166; it reads MAHGSKNHRAPGSIGAGTTPGRVFPGKRMPGRM.

It belongs to the universal ribosomal protein uL3 family. In terms of assembly, part of the 50S ribosomal subunit. Forms a cluster with proteins L14 and L19.

In terms of biological role, one of the primary rRNA binding proteins, it binds directly near the 3'-end of the 23S rRNA, where it nucleates assembly of the 50S subunit. The protein is Large ribosomal subunit protein uL3 of Gloeobacter violaceus (strain ATCC 29082 / PCC 7421).